The chain runs to 1575 residues: Ovochymase (1575 aa).

An N-terminal signal peptide occupies residues 1–19 (MIVTFVALALSCCTPQVTA). The region spanning 36–280 (IVGGEMAKLG…YSSWIANYTQ (245 aa)) is the Peptidase S1 1 domain. Cysteine 61 and cysteine 77 form a disulfide bridge. Catalysis depends on charge relay system residues histidine 76 and aspartate 132. 3 disulfides stabilise this stretch: cysteine 166–cysteine 233, cysteine 199–cysteine 212, and cysteine 223–cysteine 256. Residue serine 227 is the Charge relay system of the active site. Asparagine 277 and asparagine 303 each carry an N-linked (GlcNAc...) asparagine glycan. Intrachain disulfides connect cysteine 300/cysteine 330, cysteine 358/cysteine 386, cysteine 432/cysteine 460, and cysteine 486/cysteine 507. 2 consecutive CUB domains span residues 300–423 (CSSN…FHAV) and 432–545 (CGGI…YYFS). Residues asparagine 497, asparagine 513, and asparagine 549 are each glycosylated (N-linked (GlcNAc...) asparagine). The 236-residue stretch at 575–810 (IVNGDIAIAG…YIDWIIATAN (236 aa)) folds into the Peptidase S1 2 domain. A disulfide bond links cysteine 602 and cysteine 618. Active-site charge relay system residues include histidine 617 and aspartate 665. Intrachain disulfides connect cysteine 700–cysteine 766, cysteine 730–cysteine 745, and cysteine 756–cysteine 786. Asparagine 748 is a glycosylation site (N-linked (GlcNAc...) asparagine). The Charge relay system role is filled by serine 760. The N-linked (GlcNAc...) asparagine glycan is linked to asparagine 810. 7 cysteine pairs are disulfide-bonded: cysteine 830-cysteine 859, cysteine 889-cysteine 913, cysteine 956-cysteine 984, cysteine 1012-cysteine 1034, cysteine 1080-cysteine 1108, cysteine 1135-cysteine 1158, and cysteine 1221-cysteine 1246. 4 CUB domains span residues 830–949 (CIQL…YRLE), 956–1070 (CGQL…FVEL), 1080–1197 (CGGV…YTAV), and 1221–1341 (CQDS…YKLM). N-linked (GlcNAc...) asparagine glycans are attached at residues asparagine 968, asparagine 1027, asparagine 1087, and asparagine 1090. Asparagine 1273 is a glycosylation site (N-linked (GlcNAc...) asparagine). The Peptidase S1 3 domain occupies 1314-1575 (YNGGEISMLF…FLKWITKIIQ (262 aa)). Intrachain disulfides connect cysteine 1376–cysteine 1392 and cysteine 1493–cysteine 1507. Residue asparagine 1511 is glycosylated (N-linked (GlcNAc...) asparagine).

This sequence belongs to the peptidase S1 family. In terms of tissue distribution, expressed in the testis and ovary. Expressed in the gonads and gametes. Expressed in the follicle cells covering the vitelline coat of ovarian egg.

It localises to the secreted. Its function is as follows. May be responsible for elevation of the vitelline coat at the late developmental stage of oogenesis and during fertilization in ovarian eggs. This chain is Ovochymase, found in Halocynthia roretzi (Sea squirt).